The sequence spans 386 residues: D-amino-acid oxidase (386 aa).

FAD-binding residues include Gly14, Gly15, Val16, Val17, Glu39, Arg40, Ala51, Gly52, and Gly53. The interval 109-138 (SSSPPHPLLPPWVDPSASAAPPRELGTPDT) is disordered. Residues 112–121 (PPHPLLPPWV) show a composition bias toward pro residues. Residues Arg174, Val175, and Ala176 each contribute to the FAD site. The D-serine site is built by Tyr253, Tyr261, and Lys332. D-proline contacts are provided by Tyr261 and Lys332. Residues Lys332, Gly344, Ile345, Gly362, and Ala364 each contribute to the FAD site. Lys332 is a D-dopa binding site. Gly362 contacts D-serine. Position 362 (Gly362) interacts with D-proline. Gly362 is a D-dopa binding site.

This sequence belongs to the DAMOX/DASOX family.

The catalysed reaction is a D-alpha-amino acid + O2 + H2O = a 2-oxocarboxylate + H2O2 + NH4(+). The enzyme catalyses D-alanine + O2 + H2O = pyruvate + H2O2 + NH4(+). It catalyses the reaction D-aspartate + O2 + H2O = oxaloacetate + H2O2 + NH4(+). Its function is as follows. Catalyzes the oxidative deamination of D-amino acids with broad substrate specificity. Enables the organism to utilize D-amino acids as a source of nutrients. The sequence is that of D-amino-acid oxidase from Zea mays (Maize).